We begin with the raw amino-acid sequence, 396 residues long: Elongation factor Tu (396 aa).

In terms of domain architecture, tr-type G spans 10-206 (KPHVNVGTIG…ALDTYIPEPE (197 aa)). A G1 region spans residues 19–26 (GHVDHGKT). 19 to 26 (GHVDHGKT) provides a ligand contact to GTP. Thr-26 contacts Mg(2+). The G2 stretch occupies residues 60–64 (GITIN). The segment at 81–84 (DCPG) is G3. GTP contacts are provided by residues 81-85 (DCPGH) and 136-139 (NKAD). The interval 136–139 (NKAD) is G4. Positions 174-176 (SAL) are G5.

Belongs to the TRAFAC class translation factor GTPase superfamily. Classic translation factor GTPase family. EF-Tu/EF-1A subfamily. Monomer.

The protein localises to the cytoplasm. It carries out the reaction GTP + H2O = GDP + phosphate + H(+). In terms of biological role, GTP hydrolase that promotes the GTP-dependent binding of aminoacyl-tRNA to the A-site of ribosomes during protein biosynthesis. In Thiobacillus denitrificans (strain ATCC 25259 / T1), this protein is Elongation factor Tu.